A 281-amino-acid chain; its full sequence is NADPH-dependent 7-cyano-7-deazaguanine reductase (281 aa).

88 to 90 (IES) serves as a coordination point for substrate. 90–91 (SK) contacts NADPH. The Thioimide intermediate role is filled by C189. D196 acts as the Proton donor in catalysis. 228 to 229 (HE) contributes to the substrate binding site. Residue 257 to 258 (RG) participates in NADPH binding.

This sequence belongs to the GTP cyclohydrolase I family. QueF type 2 subfamily. Homodimer.

It localises to the cytoplasm. It carries out the reaction 7-aminomethyl-7-carbaguanine + 2 NADP(+) = 7-cyano-7-deazaguanine + 2 NADPH + 3 H(+). It participates in tRNA modification; tRNA-queuosine biosynthesis. Catalyzes the NADPH-dependent reduction of 7-cyano-7-deazaguanine (preQ0) to 7-aminomethyl-7-deazaguanine (preQ1). The chain is NADPH-dependent 7-cyano-7-deazaguanine reductase from Yersinia enterocolitica serotype O:8 / biotype 1B (strain NCTC 13174 / 8081).